The primary structure comprises 376 residues: MSSGAGWQSQASAKPVFTEAQASALVESVFGFKVSKIQPLPSYEDQNFRVHIARGKETTDDPVEYVLKISNTESSQTPELIEMQNHVIMFLRAAGFPTASVCRTKGDNTISLISIDSGSGVKSYLVRMLTYLPGRPIAEVAISHQQLYEIGRLAAQLDKALEEFHHPKLSLFHRENFIWNLKNVPLLEKYMGALSQSRNREIVEQVIRMFKEEVMTKLSHFRECINHGDLNDHNILVDLSKSASGEGVHQVSGILDFGDMSYGYYVFEVAIVIMYMMIESTNPIQVGGHILAGFESVIPLTAVERQALFLLVCSRFSQSLVMAAYSCQLYPENKEYLMITAKTGWKHLQQLFDMGQKAVEEIWFETAKSYESEISM.

The active-site Proton acceptor is the Asp-229.

This sequence belongs to the aminoglycoside phosphotransferase family.

The protein localises to the cytoplasm. The enzyme catalyses (5R)-5-hydroxy-L-lysine + GTP = (5R)-5-phosphooxy-L-lysine + GDP + H(+). Its function is as follows. Catalyzes the GTP-dependent phosphorylation of 5-hydroxy-L-lysine. In Mus musculus (Mouse), this protein is Hydroxylysine kinase (Hykk).